The sequence spans 255 residues: Imidazole glycerol phosphate synthase subunit HisF (255 aa).

Residues aspartate 11 and aspartate 130 contribute to the active site.

This sequence belongs to the HisA/HisF family. In terms of assembly, heterodimer of HisH and HisF.

Its subcellular location is the cytoplasm. The catalysed reaction is 5-[(5-phospho-1-deoxy-D-ribulos-1-ylimino)methylamino]-1-(5-phospho-beta-D-ribosyl)imidazole-4-carboxamide + L-glutamine = D-erythro-1-(imidazol-4-yl)glycerol 3-phosphate + 5-amino-1-(5-phospho-beta-D-ribosyl)imidazole-4-carboxamide + L-glutamate + H(+). The protein operates within amino-acid biosynthesis; L-histidine biosynthesis; L-histidine from 5-phospho-alpha-D-ribose 1-diphosphate: step 5/9. Functionally, IGPS catalyzes the conversion of PRFAR and glutamine to IGP, AICAR and glutamate. The HisF subunit catalyzes the cyclization activity that produces IGP and AICAR from PRFAR using the ammonia provided by the HisH subunit. The protein is Imidazole glycerol phosphate synthase subunit HisF of Campylobacter jejuni (strain RM1221).